The chain runs to 172 residues: NADH-ubiquinone oxidoreductase chain 6 (172 aa).

A run of 5 helical transmembrane segments spans residues 1–21, 27–47, 48–68, 87–107, and 138–158; these read MTYF…AVAS, YGVV…LSLG, ISFV…VVFV, VVGY…VGGF, and CGVG…FVVL.

Belongs to the complex I subunit 6 family.

The protein localises to the mitochondrion membrane. It catalyses the reaction a ubiquinone + NADH + 5 H(+)(in) = a ubiquinol + NAD(+) + 4 H(+)(out). Its function is as follows. Core subunit of the mitochondrial membrane respiratory chain NADH dehydrogenase (Complex I) that is believed to belong to the minimal assembly required for catalysis. Complex I functions in the transfer of electrons from NADH to the respiratory chain. The immediate electron acceptor for the enzyme is believed to be ubiquinone. The sequence is that of NADH-ubiquinone oxidoreductase chain 6 (MT-ND6) from Uria aalge (Common mure).